The following is a 453-amino-acid chain: Bifunctional protein GlmU (453 aa).

A pyrophosphorylase region spans residues 1-226 (MAFSVVILAA…EIEVEGINNR (226 aa)). UDP-N-acetyl-alpha-D-glucosamine is bound by residues 8–11 (LAAG), lysine 22, glutamine 73, and 78–79 (GT). Residue aspartate 102 coordinates Mg(2+). Positions 137, 151, 166, and 224 each coordinate UDP-N-acetyl-alpha-D-glucosamine. A Mg(2+)-binding site is contributed by asparagine 224. Residues 227–247 (KQLAAIERAFQFEQAQELMMQ) form a linker region. The interval 248–453 (GVSLLDPHRF…SGWQRPTKPE (206 aa)) is N-acetyltransferase. 2 residues coordinate UDP-N-acetyl-alpha-D-glucosamine: arginine 330 and lysine 348. Histidine 360 functions as the Proton acceptor in the catalytic mechanism. 2 residues coordinate UDP-N-acetyl-alpha-D-glucosamine: tyrosine 363 and asparagine 374. Acetyl-CoA contacts are provided by residues alanine 377, 383–384 (NY), serine 402, alanine 420, and arginine 437.

It in the N-terminal section; belongs to the N-acetylglucosamine-1-phosphate uridyltransferase family. The protein in the C-terminal section; belongs to the transferase hexapeptide repeat family. Homotrimer. The cofactor is Mg(2+).

It localises to the cytoplasm. The catalysed reaction is alpha-D-glucosamine 1-phosphate + acetyl-CoA = N-acetyl-alpha-D-glucosamine 1-phosphate + CoA + H(+). It carries out the reaction N-acetyl-alpha-D-glucosamine 1-phosphate + UTP + H(+) = UDP-N-acetyl-alpha-D-glucosamine + diphosphate. It functions in the pathway nucleotide-sugar biosynthesis; UDP-N-acetyl-alpha-D-glucosamine biosynthesis; N-acetyl-alpha-D-glucosamine 1-phosphate from alpha-D-glucosamine 6-phosphate (route II): step 2/2. The protein operates within nucleotide-sugar biosynthesis; UDP-N-acetyl-alpha-D-glucosamine biosynthesis; UDP-N-acetyl-alpha-D-glucosamine from N-acetyl-alpha-D-glucosamine 1-phosphate: step 1/1. Its pathway is bacterial outer membrane biogenesis; LPS lipid A biosynthesis. Functionally, catalyzes the last two sequential reactions in the de novo biosynthetic pathway for UDP-N-acetylglucosamine (UDP-GlcNAc). The C-terminal domain catalyzes the transfer of acetyl group from acetyl coenzyme A to glucosamine-1-phosphate (GlcN-1-P) to produce N-acetylglucosamine-1-phosphate (GlcNAc-1-P), which is converted into UDP-GlcNAc by the transfer of uridine 5-monophosphate (from uridine 5-triphosphate), a reaction catalyzed by the N-terminal domain. The protein is Bifunctional protein GlmU of Pseudoalteromonas atlantica (strain T6c / ATCC BAA-1087).